We begin with the raw amino-acid sequence, 485 residues long: MIISMNQTEPAQLADGEHLSGYASSSNSVRYLDDRHPLDYLDLGTVHALNTTAINTSDLNETGSRPLDPVLIDRFLSNRAVDSPWYHMLISMYGVLIVFGALGNTLVVIAVIRKPIMRTARNLFILNLAISDLLLCLVTMPLTLMEILSKYWPYGSCSILCKTIAMLQALCIFVSTISITAIAFDRYQVIVYPTRDSLQFVGAVTILAGIWALALLLASPLFVYKELINTDTPALLQQIGLQDTIPYCIEDWPSRNGRFYYSIFSLCVQYLVPILIVSVAYFGIYNKLKSRITVVAVQASSAQRKVERGRRMKRTNCLLISIAIIFGVSWLPLNFFNLYADMERSPVTQSMLVRYAICHMIGMSSACSNPLLYGWLNDNFRKEFQELLCRCSDTNVALNGHTTGCNVQAAARRRRKLGAELSKGELKLLGPGGAQSGTAGGEGGLAATDFMTGHHEGGLRSAITESVALTDHNPVPSEVTKLMPR.

The Extracellular segment spans residues 1 to 91 (MIISMNQTEP…DSPWYHMLIS (91 aa)). A helical transmembrane segment spans residues 92–112 (MYGVLIVFGALGNTLVVIAVI). Residues 113-122 (RKPIMRTARN) are Cytoplasmic-facing. The helical transmembrane segment at 123 to 143 (LFILNLAISDLLLCLVTMPLT) threads the bilayer. Over 144-163 (LMEILSKYWPYGSCSILCKT) the chain is Extracellular. A disulfide bond links Cys161 and Cys248. The chain crosses the membrane as a helical span at residues 164-184 (IAMLQALCIFVSTISITAIAF). Residues 185 to 202 (DRYQVIVYPTRDSLQFVG) lie on the Cytoplasmic side of the membrane. Residues 203–223 (AVTILAGIWALALLLASPLFV) form a helical membrane-spanning segment. The Extracellular portion of the chain corresponds to 224 to 262 (YKELINTDTPALLQQIGLQDTIPYCIEDWPSRNGRFYYS). Residues 263–283 (IFSLCVQYLVPILIVSVAYFG) traverse the membrane as a helical segment. The Cytoplasmic portion of the chain corresponds to 284-317 (IYNKLKSRITVVAVQASSAQRKVERGRRMKRTNC). Residues 318–338 (LLISIAIIFGVSWLPLNFFNL) form a helical membrane-spanning segment. Residues 339–355 (YADMERSPVTQSMLVRY) are Extracellular-facing. A helical transmembrane segment spans residues 356–376 (AICHMIGMSSACSNPLLYGWL). At 377-485 (NDNFRKEFQE…PSEVTKLMPR (109 aa)) the chain is on the cytoplasmic side.

The protein belongs to the G-protein coupled receptor 1 family. Expressed in midgut, brain lobes and ventral nerve cord of larvae. In adults, expressed in a pair of dorsolateral neurons in the protocerebrum, and the central complex and a small number of neurons in the subesophageal ganglion (at protein level). Expressed in a subset of sugar-responsive PAIN neurons in the thoracic body but is absent from other peripheral PAIN neurons.

It localises to the membrane. Receptor for NPF. Integral part of the sensory system that mediates food signaling, providing the neural basis for the regulation of food response; coordinates larval foraging and social behavior changes during development. Required in dopaminergic (DA) neurons that innervate the mushroom body for satiety to suppress appetitive memory performance; a key factor in the internal state of hunger in the brain. NPF neurons coordinately modulate diverse sensory and motor neurons important for feeding, flight, and locomotion. NPF/NPFR pathway exerts its suppressive effect on larval aversion to diverse stressful stimuli (chemical stress and noxious heat) through attenuation of TRP channel-induced neuronal excitation. NPF neural signaling system plays a physiological role in acute modulation of alcohol sensitivity in adults, rather than a general response to intoxication by sedative agents. Activation and inhibition of the NPF system reduces and enhances ethanol preference, respectively. Sexual experience, the NPF system activity and ethanol consumption are all linked; sexual deprivation is a major contributor to enhanced ethanol preference. In Drosophila melanogaster (Fruit fly), this protein is Neuropeptide F receptor.